The primary structure comprises 168 residues: Crossover junction endodeoxyribonuclease RuvC (168 aa).

Active-site residues include Asp-9, Glu-70, and Asp-145. Mg(2+)-binding residues include Asp-9, Glu-70, and Asp-145.

This sequence belongs to the RuvC family. In terms of assembly, homodimer which binds Holliday junction (HJ) DNA. The HJ becomes 2-fold symmetrical on binding to RuvC with unstacked arms; it has a different conformation from HJ DNA in complex with RuvA. In the full resolvosome a probable DNA-RuvA(4)-RuvB(12)-RuvC(2) complex forms which resolves the HJ. Requires Mg(2+) as cofactor.

It localises to the cytoplasm. The enzyme catalyses Endonucleolytic cleavage at a junction such as a reciprocal single-stranded crossover between two homologous DNA duplexes (Holliday junction).. Its function is as follows. The RuvA-RuvB-RuvC complex processes Holliday junction (HJ) DNA during genetic recombination and DNA repair. Endonuclease that resolves HJ intermediates. Cleaves cruciform DNA by making single-stranded nicks across the HJ at symmetrical positions within the homologous arms, yielding a 5'-phosphate and a 3'-hydroxyl group; requires a central core of homology in the junction. The consensus cleavage sequence is 5'-(A/T)TT(C/G)-3'. Cleavage occurs on the 3'-side of the TT dinucleotide at the point of strand exchange. HJ branch migration catalyzed by RuvA-RuvB allows RuvC to scan DNA until it finds its consensus sequence, where it cleaves and resolves the cruciform DNA. This chain is Crossover junction endodeoxyribonuclease RuvC, found in Chlamydia pneumoniae (Chlamydophila pneumoniae).